The sequence spans 283 residues: Pantothenate synthetase (283 aa).

30–37 (MGYLHEGH) is an ATP binding site. The Proton donor role is filled by H37. Position 61 (Q61) interacts with (R)-pantoate. Q61 provides a ligand contact to beta-alanine. 147 to 150 (GRKD) provides a ligand contact to ATP. A (R)-pantoate-binding site is contributed by Q153. ATP-binding positions include V176 and 184 to 187 (MSSR).

This sequence belongs to the pantothenate synthetase family. In terms of assembly, homodimer.

It localises to the cytoplasm. It carries out the reaction (R)-pantoate + beta-alanine + ATP = (R)-pantothenate + AMP + diphosphate + H(+). It functions in the pathway cofactor biosynthesis; (R)-pantothenate biosynthesis; (R)-pantothenate from (R)-pantoate and beta-alanine: step 1/1. In terms of biological role, catalyzes the condensation of pantoate with beta-alanine in an ATP-dependent reaction via a pantoyl-adenylate intermediate. This chain is Pantothenate synthetase, found in Syntrophotalea carbinolica (strain DSM 2380 / NBRC 103641 / GraBd1) (Pelobacter carbinolicus).